An 852-amino-acid chain; its full sequence is Metastasis-associated in colon cancer protein 1 (852 aa).

S19 is subject to Phosphoserine. In terms of domain architecture, ZU5 spans 212 to 349 (VTIACKVNHQ…LSQVMYLVVA (138 aa)). The region spanning 549 to 619 (NFSNYGVTLK…HCKNVKVISK (71 aa)) is the SH3 domain.

In terms of assembly, interacts with FASLG. Preferentially expressed in metastasizing tumors.

Its subcellular location is the cytoplasm. The protein resides in the nucleus. In terms of biological role, acts as a transcription activator for MET and as a key regulator of HGF-MET signaling. Promotes cell motility, proliferation and hepatocyte growth factor (HGF)-dependent scattering in vitro and tumor growth and metastasis in vivo. In Homo sapiens (Human), this protein is Metastasis-associated in colon cancer protein 1 (MACC1).